Here is a 240-residue protein sequence, read N- to C-terminus: 1-(5-phosphoribosyl)-5-[(5-phosphoribosylamino)methylideneamino] imidazole-4-carboxamide isomerase (240 aa).

The Proton acceptor role is filled by D8. D130 functions as the Proton donor in the catalytic mechanism.

It belongs to the HisA/HisF family.

Its subcellular location is the cytoplasm. It carries out the reaction 1-(5-phospho-beta-D-ribosyl)-5-[(5-phospho-beta-D-ribosylamino)methylideneamino]imidazole-4-carboxamide = 5-[(5-phospho-1-deoxy-D-ribulos-1-ylimino)methylamino]-1-(5-phospho-beta-D-ribosyl)imidazole-4-carboxamide. It functions in the pathway amino-acid biosynthesis; L-histidine biosynthesis; L-histidine from 5-phospho-alpha-D-ribose 1-diphosphate: step 4/9. This is 1-(5-phosphoribosyl)-5-[(5-phosphoribosylamino)methylideneamino] imidazole-4-carboxamide isomerase from Flavobacterium johnsoniae (strain ATCC 17061 / DSM 2064 / JCM 8514 / BCRC 14874 / CCUG 350202 / NBRC 14942 / NCIMB 11054 / UW101) (Cytophaga johnsonae).